The primary structure comprises 541 residues: Tyrosine-protein kinase Yes (541 aa).

A compositionally biased stretch (basic and acidic residues) spans 1-10 (MGCIKSKENK). The segment at 1-29 (MGCIKSKENKSPAIKYTPENPTEPVNTSA) is disordered. The N-myristoyl glycine moiety is linked to residue G2. C3 carries the S-palmitoyl cysteine; in membrane form lipid modification. The segment covering 19 to 29 (ENPTEPVNTSA) has biased composition (polar residues). Y32 is modified (phosphotyrosine). The 62-residue stretch at 89 to 150 (GGVTIFVALY…PSNYVAPADS (62 aa)) folds into the SH3 domain. In terms of domain architecture, SH2 spans 156-253 (WYFGKMGRKD…GLCHKLTTVC (98 aa)). The Protein kinase domain maps to 275-528 (LRLEVKLGQG…YIQSFLEDYF (254 aa)). Residues 281 to 289 (LGQGCFGEV) and K303 contribute to the ATP site. Residues Y334 and Y343 each carry the phosphotyrosine modification. The Proton acceptor role is filled by D394. Y424 is modified (phosphotyrosine; by autocatalysis). Y535 is modified (phosphotyrosine).

In terms of assembly, interacts with YAP1 and CSF1R. Interacts with FASLG. Interacts with CTNND1; this interaction allows YES1-mediated activation of FYN and FER and subsequent phosphorylation of CTNND1. Interacts with IL6ST/gp130. Interacts with SCRIB, when YES1 is in a closed conformation; the interaction facilitates YES1 autophosphorylation. In terms of processing, phosphorylated. Phosphorylation by CSK on the C-terminal tail maintains the enzyme in an inactive state. Autophosphorylation at Tyr-424 maintains enzyme activity by blocking CSK-mediated inhibition. Post-translationally, palmitoylation at Cys-3 promotes membrane localization.

It localises to the cell membrane. The protein resides in the cytoplasm. Its subcellular location is the cytoskeleton. The protein localises to the microtubule organizing center. It is found in the centrosome. It localises to the cytosol. The protein resides in the cell junction. The catalysed reaction is L-tyrosyl-[protein] + ATP = O-phospho-L-tyrosyl-[protein] + ADP + H(+). Non-receptor protein tyrosine kinase that is involved in the regulation of cell growth and survival, apoptosis, cell-cell adhesion, cytoskeleton remodeling, and differentiation. Stimulation by receptor tyrosine kinases (RTKs) including EGFR, PDGFR, CSF1R and FGFR leads to recruitment of YES1 to the phosphorylated receptor, and activation and phosphorylation of downstream substrates. Upon EGFR activation, promotes the phosphorylation of PARD3 to favor epithelial tight junction assembly. Participates in the phosphorylation of specific junctional components such as CTNND1 by stimulating the FYN and FER tyrosine kinases at cell-cell contacts. Upon T-cell stimulation by CXCL12, phosphorylates collapsin response mediator protein 2/DPYSL2 and induces T-cell migration. Participates in CD95L/FASLG signaling pathway and mediates AKT-mediated cell migration. Plays a role in cell cycle progression by phosphorylating the cyclin dependent kinase 4/CDK4 thus regulating the G1 phase. Also involved in G2/M progression and cytokinesis. Catalyzes phosphorylation of organic cation transporter OCT2 which induces its transport activity. The polypeptide is Tyrosine-protein kinase Yes (Yes1) (Rattus norvegicus (Rat)).